A 568-amino-acid chain; its full sequence is MSMAGWITIGIFFLCVLALTRPLGGFLVSVLEGRRTFLSPILGPVERALYRFSGVRPEEEQSWSHYALALLSFKIVCFVAVYAILRLQAYLPLNPAGQGSVAPDLAYNTAVSFVTNTNWQSYGGETTMSYLSQMLGLTVQNFVSAAAGIAVAAAIIRGFARRESKAIGNFWVDMVRATLYVLLPISVVLSLFYVFEGIPQTFSGSVVATTYEGIHQTIALGPVASQEAIKMLGTNGGGFFNVNSAHPFENPDALTNFVEMISIFAIGAGLTNVFGRMVGNERQGWAVFSAMSVLFFVGVTAVYWAEAHGNPAFSAFGIDQSLGNMEGKETRFGVAASALFAAVTTDASCGAVNAMHESFLPLGGMVPLINMMLGEVIIGGVGAGLYGFILFAIIAVFMAGLMVGRTPEYLGKKIEAREIKMTMLAVLCLPLVMLGFTAVAVVVKPGLAALSATGPHGFTEALYAYTSAAANNGSAFAGLTANPYWNITLGIGMMIGRFFVIVPALAIAGSMAAKKIVPPSSGTFPTDTGLFIGLVAGVIIIVGGLTFLPALALGPIVEHLSMLRGTLY.

12 consecutive transmembrane segments (helical) span residues 7–27, 65–85, 136–156, 179–199, 254–274, 285–305, 332–352, 354–374, 377–397, 423–443, 487–507, and 530–550; these read ITIG…GGFL, HYAL…YAIL, GLTV…AAII, LYVL…EGIP, LTNF…TNVF, WAVF…VYWA, FGVA…CGAV, AMHE…MMLG, IIGG…IAVF, MLAV…AVVV, ITLG…ALAI, and LFIG…FLPA.

It belongs to the KdpA family. As to quaternary structure, the system is composed of three essential subunits: KdpA, KdpB and KdpC.

The protein localises to the cell inner membrane. In terms of biological role, part of the high-affinity ATP-driven potassium transport (or Kdp) system, which catalyzes the hydrolysis of ATP coupled with the electrogenic transport of potassium into the cytoplasm. This subunit binds the periplasmic potassium ions and delivers the ions to the membrane domain of KdpB through an intramembrane tunnel. The chain is Potassium-transporting ATPase potassium-binding subunit from Granulibacter bethesdensis (strain ATCC BAA-1260 / CGDNIH1).